A 278-amino-acid polypeptide reads, in one-letter code: Octanoyltransferase LipM (278 aa).

The region spanning lysine 33–leucine 248 is the BPL/LPL catalytic domain. The active-site Acyl-thioester intermediate is cysteine 150.

Belongs to the octanoyltransferase LipM family. In terms of assembly, monomer.

It carries out the reaction octanoyl-[ACP] + L-lysyl-[protein] = N(6)-octanoyl-L-lysyl-[protein] + holo-[ACP] + H(+). The protein operates within protein modification; protein lipoylation via endogenous pathway; protein N(6)-(lipoyl)lysine from octanoyl-[acyl-carrier-protein]. Catalyzes the transfer of endogenously produced octanoic acid from octanoyl-acyl-carrier-protein onto the lipoyl domain of GcvH, an intermediate carrier during protein lipoylation. This chain is Octanoyltransferase LipM, found in Bacillus cereus (strain ATCC 14579 / DSM 31 / CCUG 7414 / JCM 2152 / NBRC 15305 / NCIMB 9373 / NCTC 2599 / NRRL B-3711).